A 697-amino-acid polypeptide reads, in one-letter code: MAR-binding filament-like protein 1 (697 aa).

A chloroplast-targeting transit peptide spans 1–41 (MATSCFPPFSASSSSLCSSQFTPLLSCPRNTQICRKKRPVM). A thylakoid-targeting transit peptide spans 42 to 79 (ASMHSENQKESNVCNRRSILFVGFSVLPLLNLRARALE). The Lumenal, thylakoid segment spans residues 80 to 106 (GLSTDSQAQPQKEETEQTIQGSAGNPF). The tract at residues 81–100 (LSTDSQAQPQKEETEQTIQG) is disordered. A helical membrane pass occupies residues 107–127 (VSLLNGLGVVGSGVLGSLYAL). The Stromal segment spans residues 128–697 (ARNEKAVSDA…GEKEKVNVQQ (570 aa)). Residues 203–671 (LQNEKKLAED…KGEILRLRSQ (469 aa)) are a coiled coil. A disordered region spans residues 599–629 (TSRNSSLEDEREVHRQSVSEQKQISQEAQEN). The segment covering 604-615 (SLEDEREVHRQS) has biased composition (basic and acidic residues). Residues 616 to 627 (VSEQKQISQEAQ) show a composition bias toward polar residues.

Interacts with MAF1. Interacts with PTST2; the interaction is essential for the initiation of starch granules biosynthesis in leaf chloroplasts, for the correct location of the process in the stromal spaces between the thylakoid membranes, and for the association of PTST2 with the thylakoid membranes. Phosphorylated in vitro by human casein kinase II. Post-translationally, predicted to be translocated into the thylakoid by the Tat system.

The protein localises to the plastid. The protein resides in the chloroplast. Its subcellular location is the chloroplast thylakoid membrane. It is found in the chloroplast stroma. It localises to the chloroplast nucleoid. The protein localises to the nucleus. The protein resides in the nucleus matrix. Required for the initiation of starch granules biosynthesis in leaf chloroplasts. Anchored to the thylakoid membranes with its C-terminus facing into the stroma where it is essential for localizing PTST2 and SS4 to the stromal spaces between the thylakoid membranes in order to begin starch granule formation. Associated with leaf chloroplastic nucleoids in vivo. Binds to various chloroplastic double-stranded DNA fragments without particular sequence specificity in vitro. May function at the interface between nucleoids and thylakoids possibly by anchoring nucleoids to the thylakoid membrane system in mature chloroplasts. Binds nuclear DNA. Interacts with chromatin via matrix attachment regions (MARs). Likely to participate in nuclear architecture by connecting chromatin with the nuclear matrix and potentially with the nuclear envelope. This Solanum lycopersicum (Tomato) protein is MAR-binding filament-like protein 1.